The following is a 405-amino-acid chain: Acetylornithine aminotransferase 1 (405 aa).

Residues 103 to 104 (GA) and phenylalanine 136 each bind pyridoxal 5'-phosphate. Arginine 139 lines the N(2)-acetyl-L-ornithine pocket. 221–224 (DEVQ) is a pyridoxal 5'-phosphate binding site. Lysine 250 bears the N6-(pyridoxal phosphate)lysine mark. Serine 278 contacts N(2)-acetyl-L-ornithine. Threonine 279 contacts pyridoxal 5'-phosphate.

It belongs to the class-III pyridoxal-phosphate-dependent aminotransferase family. ArgD subfamily. Homodimer. Requires pyridoxal 5'-phosphate as cofactor.

Its subcellular location is the cytoplasm. It catalyses the reaction N(2)-acetyl-L-ornithine + 2-oxoglutarate = N-acetyl-L-glutamate 5-semialdehyde + L-glutamate. It functions in the pathway amino-acid biosynthesis; L-arginine biosynthesis; N(2)-acetyl-L-ornithine from L-glutamate: step 4/4. This is Acetylornithine aminotransferase 1 from Bradyrhizobium diazoefficiens (strain JCM 10833 / BCRC 13528 / IAM 13628 / NBRC 14792 / USDA 110).